A 616-amino-acid polypeptide reads, in one-letter code: UPF0329 protein ECU02_1540 (616 aa).

2 stretches are compositionally biased toward basic and acidic residues: residues Glu-350–Gly-359 and Gly-369–Asp-381. Residues Glu-350–Ile-427 form a disordered region. A compositionally biased stretch (acidic residues) spans Gly-382 to Ala-396. A compositionally biased stretch (basic residues) spans Ala-408 to Ile-427.

This sequence belongs to the UPF0329 family.

This chain is UPF0329 protein ECU02_1540, found in Encephalitozoon cuniculi (strain GB-M1) (Microsporidian parasite).